The following is a 271-amino-acid chain: MAKVPDMFEDLKNCYSENEEDSSSIDHLSLNQKSFYHVSYGPLHEGCMDQSVSLSISETSKTSKLTFKESMVVVATNGKVLKKRRLSLSQSITDDDLEAIANDSEEEIIKPRSAPFSFLSNVKYNFMRIIKYEFILNDALNQSIIRANDQYLTAAALHNLDEAVKFDMGAYKSSKDDAKITVILRISKTQLYVTAQDEDQPVLLKEMPEIPKTITGSETNLLFFWETHGTKNYFTSVAHPNLFIATKQDYWVCLAGGPPSITDFQILENQA.

Positions 1–112 are excised as a propeptide; the sequence is MAKVPDMFED…DSEEEIIKPR (112 aa). Lys-82 carries the N6-acetyllysine modification. Residues Lys-82 and Lys-83 are each lipidated (N6-myristoyl lysine). The interval 82-86 is nuclear localization signal (NLS); the sequence is KKRRL. At Ser-87 the chain carries Phosphoserine. Residues Asn-102 and Asn-141 are each glycosylated (N-linked (GlcNAc...) asparagine).

This sequence belongs to the IL-1 family. Monomer. Interacts with TMED10; the interaction mediates the translocation from the cytoplasm into the ERGIC (endoplasmic reticulum-Golgi intermediate compartment) and thereby secretion. Interacts with IL1R1. Interacts with S100A13; this interaction is the first step in the export of IL1A, followed by direct translocation of this complex across the plasma membrane. Post-translationally, acetylated within its nuclear localization sequence, which impacts subcellular localization. In terms of processing, proteolytic processed by CAPN1 in a calcium-dependent manner. Cleavage from 31 kDa precursor to 18 kDa biologically active molecules. Phosphorylated. Phosphorylation greatly enhances susceptibility to digestion and promotes the conversion of pre-IL1A alpha to the biologically active IL1A.

The protein localises to the nucleus. The protein resides in the cytoplasm. Its subcellular location is the secreted. Functionally, cytokine constitutively present intracellularly in nearly all resting non-hematopoietic cells that plays an important role in inflammation and bridges the innate and adaptive immune systems. After binding to its receptor IL1R1 together with its accessory protein IL1RAP, forms the high affinity interleukin-1 receptor complex. Signaling involves the recruitment of adapter molecules such as MYD88, IRAK1 or IRAK4. In turn, mediates the activation of NF-kappa-B and the three MAPK pathways p38, p42/p44 and JNK pathways. Within the cell, acts as an alarmin and cell death results in its liberation in the extracellular space after disruption of the cell membrane to induce inflammation and alert the host to injury or damage. In addition to its role as a danger signal, which occurs when the cytokine is passively released by cell necrosis, directly senses DNA damage and acts as a signal for genotoxic stress without loss of cell integrity. The sequence is that of Interleukin-1 alpha (IL1A) from Homo sapiens (Human).